We begin with the raw amino-acid sequence, 369 residues long: Probable methyltransferase TCM_000331 (369 aa).

Residues Tyr-18, Cys-60, Asn-65, Asp-98, Leu-99, Ser-137, and Phe-138 each contribute to the S-adenosyl-L-homocysteine site. Residues Asn-176, Asp-261, Phe-263, and Asn-264 each contribute to the Mg(2+) site.

This sequence belongs to the methyltransferase superfamily. Type-7 methyltransferase family. The cofactor is Mg(2+).

The polypeptide is Probable methyltransferase TCM_000331 (Theobroma cacao (Cacao)).